The chain runs to 1343 residues: Kinesin-like protein KIF7 (1343 aa).

Residues 15–349 (PVRVALRVRP…LNYASRAQNI (335 aa)) enclose the Kinesin motor domain. Residue 94–101 (GQTGSGKT) participates in ATP binding. Disordered regions lie at residues 356–382 (NWRPEAERPPEETASGARGPPRHRSET), 451–483 (RSALSSASGPDSGIESASVEDQAAQGAGGRKED), and 611–639 (EVNRLGSGSSAASEEEEEEEEPPRRTLHL). The interaction with DLG5 stretch occupies residues 358 to 479 (RPEAERPPEE…EDQAAQGAGG (122 aa)). The tract at residues 358–1206 (RPEAERPPEE…LGRYMWINQE (849 aa)) is interaction with SMO. A coiled-coil region spans residues 480–542 (RKEDEGAQQL…ELRLRLELVR (63 aa)). The segment at 513-775 (AMEQYKLQSD…LRELEGKELQ (263 aa)) is sufficient for interaction with NPHP1. Coiled-coil stretches lie at residues 698-1057 (ASEW…AAIE) and 1109-1211 (TLRE…KQKL). Serine 898 carries the phosphoserine modification. Disordered regions lie at residues 1219 to 1238 (HSRGGEKRSLCSEGRQAPGN) and 1310 to 1343 (GEAGLPWNFGPLSKPRRELRRASPGMIDVRKNPL).

This sequence belongs to the TRAFAC class myosin-kinesin ATPase superfamily. Kinesin family. KIF27 subfamily. Can form homodimers and interacts with microtubules. Interacts with GLI1, GLI2, GLI3, SMO and SUFU. Interacts with NPHP1. Interacts with SMO and DLG5 (via PDZ4 or guanylate kinase-like domain). Post-translationally, polyubiquitinated by UBR3. In terms of tissue distribution, embryonic stem cells, melanotic melanoma and Jurkat T-cells. Expressed in heart, lung, liver, kidney, testis, retina, placenta, pancreas, colon, small intestin, prostate and thymus.

Its subcellular location is the cell projection. It is found in the cilium. The protein localises to the cytoplasm. The protein resides in the cytoskeleton. It localises to the cilium basal body. Essential for hedgehog signaling regulation: acts both as a negative and positive regulator of sonic hedgehog (Shh) and Indian hedgehog (Ihh) pathways, acting downstream of SMO, through both SUFU-dependent and -independent mechanisms. Involved in the regulation of microtubular dynamics. Required for proper organization of the ciliary tip and control of ciliary localization of SUFU-GLI2 complexes. Required for localization of GLI3 to cilia in response to Shh. Negatively regulates Shh signaling by preventing inappropriate activation of the transcriptional activator GLI2 in the absence of ligand. Positively regulates Shh signaling by preventing the processing of the transcription factor GLI3 into its repressor form. In keratinocytes, promotes the dissociation of SUFU-GLI2 complexes, GLI2 nuclear translocation and Shh signaling activation. Involved in the regulation of epidermal differentiation and chondrocyte development. The polypeptide is Kinesin-like protein KIF7 (KIF7) (Homo sapiens (Human)).